The primary structure comprises 505 residues: ATP synthase subunit beta (505 aa).

The interval 1-25 (MAKAATPKETAAVKKPAAPKKAATA) is disordered. 183-190 (GGAGVGKT) is an ATP binding site.

It belongs to the ATPase alpha/beta chains family. In terms of assembly, F-type ATPases have 2 components, CF(1) - the catalytic core - and CF(0) - the membrane proton channel. CF(1) has five subunits: alpha(3), beta(3), gamma(1), delta(1), epsilon(1). CF(0) has three main subunits: a(1), b(2) and c(9-12). The alpha and beta chains form an alternating ring which encloses part of the gamma chain. CF(1) is attached to CF(0) by a central stalk formed by the gamma and epsilon chains, while a peripheral stalk is formed by the delta and b chains.

Its subcellular location is the cell inner membrane. The enzyme catalyses ATP + H2O + 4 H(+)(in) = ADP + phosphate + 5 H(+)(out). Functionally, produces ATP from ADP in the presence of a proton gradient across the membrane. The catalytic sites are hosted primarily by the beta subunits. This chain is ATP synthase subunit beta, found in Sinorhizobium fredii (strain NBRC 101917 / NGR234).